The primary structure comprises 872 residues: Alanine--tRNA ligase (872 aa).

Positions 566, 570, 668, and 672 each coordinate Zn(2+).

This sequence belongs to the class-II aminoacyl-tRNA synthetase family. The cofactor is Zn(2+).

It is found in the cytoplasm. It catalyses the reaction tRNA(Ala) + L-alanine + ATP = L-alanyl-tRNA(Ala) + AMP + diphosphate. In terms of biological role, catalyzes the attachment of alanine to tRNA(Ala) in a two-step reaction: alanine is first activated by ATP to form Ala-AMP and then transferred to the acceptor end of tRNA(Ala). Also edits incorrectly charged Ser-tRNA(Ala) and Gly-tRNA(Ala) via its editing domain. This Lactococcus lactis subsp. cremoris (strain MG1363) protein is Alanine--tRNA ligase.